A 463-amino-acid chain; its full sequence is Probable ECA polymerase (463 aa).

11 helical membrane-spanning segments follow: residues 6 to 26, 39 to 59, 65 to 85, 112 to 132, 154 to 174, 180 to 200, 201 to 221, 222 to 242, 340 to 360, 377 to 397, and 408 to 428; these read FGGL…LTWM, FSLL…VLVF, VVPV…YAIY, ANLT…IFFL, GVAL…VYFL, AWLM…VIVG, GTRA…IVRG, WITL…MFWL, LVVM…GLVI, YKAA…IVLT, and VVFF…LYWL.

The protein belongs to the WzyE family. As to quaternary structure, probably part of a complex composed of WzxE, WzyE and WzzE.

The protein localises to the cell inner membrane. It participates in bacterial outer membrane biogenesis; enterobacterial common antigen biosynthesis. Probably involved in the polymerization of enterobacterial common antigen (ECA) trisaccharide repeat units. The protein is Probable ECA polymerase of Pectobacterium carotovorum subsp. carotovorum (strain PC1).